The primary structure comprises 900 residues: Alpha-actinin-3 (900 aa).

Methionine 1 carries the N-acetylmethionine modification. The disordered stretch occupies residues methionine 1–methionine 26. The tract at residues methionine 1–histidine 260 is actin-binding. Residues leucine 10–glutamate 24 show a composition bias toward gly residues. Calponin-homology (CH) domains lie at lysine 44–alanine 148 and threonine 157–alanine 263. Spectrin repeat units lie at residues lysine 287–serine 397, histidine 407–arginine 512, glutamine 522–glutamate 633, and arginine 643–asparagine 746. EF-hand domains lie at glutamate 759–aspartate 794 and leucine 795–glutamate 830. Ca(2+)-binding residues include aspartate 772, asparagine 776, methionine 778, aspartate 783, aspartate 808, and asparagine 810.

Belongs to the alpha-actinin family. Homodimer; antiparallel. Also forms heterodimers with ACTN2. Interacts with MYOZ1. Expression restricted to skeletal muscle fast (type 2) fibers (at protein level).

F-actin cross-linking protein which is thought to anchor actin to a variety of intracellular structures. This is a bundling protein. The polypeptide is Alpha-actinin-3 (Actn3) (Mus musculus (Mouse)).